The following is a 204-amino-acid chain: Phosphopantothenoylcysteine decarboxylase (204 aa).

FMN is bound by residues phenylalanine 59 and 104–107 (DANT). A substrate-binding site is contributed by asparagine 140. Cysteine 173 acts as the Proton donor in catalysis.

Belongs to the HFCD (homooligomeric flavin containing Cys decarboxylase) superfamily. In terms of assembly, homotrimer. FMN is required as a cofactor.

It catalyses the reaction N-[(R)-4-phosphopantothenoyl]-L-cysteine + H(+) = (R)-4'-phosphopantetheine + CO2. Its pathway is cofactor biosynthesis; coenzyme A biosynthesis; CoA from (R)-pantothenate: step 3/5. Functionally, catalyzes the decarboxylation of the cysteine moiety of 4-phosphopantothenoylcysteine to form 4'-phosphopantotheine and this reaction forms part of the biosynthesis of coenzyme A. The polypeptide is Phosphopantothenoylcysteine decarboxylase (PPCDC) (Homo sapiens (Human)).